Reading from the N-terminus, the 510-residue chain is Catalase (510 aa).

The N-terminal stretch at 1 to 26 (MPLLNWSRHMVCLTAAGLITVPTVYA) is a signal peptide. Active-site residues include His-78 and Asn-150. Tyr-358 is a binding site for heme. The segment covering 386–400 (NQDGALNTGHTTSGV) has biased composition (polar residues). The segment at 386–412 (NQDGALNTGHTTSGVNYEPSRLEPRPA) is disordered.

The protein belongs to the catalase family. Heme is required as a cofactor.

The protein localises to the periplasm. It carries out the reaction 2 H2O2 = O2 + 2 H2O. In terms of biological role, decomposes hydrogen peroxide into water and oxygen; serves to protect cells from the toxic effects of hydrogen peroxide. The polypeptide is Catalase (katB) (Pseudomonas syringae pv. syringae).